Consider the following 414-residue polypeptide: Tyrosine--tRNA ligase (414 aa).

Y38 provides a ligand contact to L-tyrosine. Positions 43–52 match the 'HIGH' region motif; sequence PTAISLHLGN. L-tyrosine contacts are provided by Y165 and Q169. Positions 227-231 match the 'KMSKS' region motif; that stretch reads KIGKS. K230 serves as a coordination point for ATP. The region spanning 349–413 is the S4 RNA-binding domain; that stretch reads DDLFLTLVDS…KGKKQYWVIY (65 aa).

This sequence belongs to the class-I aminoacyl-tRNA synthetase family. TyrS type 1 subfamily. In terms of assembly, homodimer.

Its subcellular location is the cytoplasm. It catalyses the reaction tRNA(Tyr) + L-tyrosine + ATP = L-tyrosyl-tRNA(Tyr) + AMP + diphosphate + H(+). Its function is as follows. Catalyzes the attachment of tyrosine to tRNA(Tyr) in a two-step reaction: tyrosine is first activated by ATP to form Tyr-AMP and then transferred to the acceptor end of tRNA(Tyr). This Mycoplasmopsis pulmonis (strain UAB CTIP) (Mycoplasma pulmonis) protein is Tyrosine--tRNA ligase.